A 616-amino-acid polypeptide reads, in one-letter code: Electron transfer flavoprotein-ubiquinone oxidoreductase, mitochondrial (616 aa).

The transit peptide at 1 to 32 directs the protein to the mitochondrion; it reads MLVRLTKLSCPAYQWFHALKIKKCLPLCAPRC. 70–84 is an FAD binding site; that stretch reads VVIVGAGPAGLSAAI. Lys95 is subject to N6-acetyllysine. Residues 108 to 129 lie within the membrane without spanning it; sequence IGAHTLSGACLDPAAFKELFPD. N6-acetyllysine is present on residues Lys131 and Lys222. Residues Gly304 and Gly305 each contribute to the a ubiquinone site. Lys356 and Lys415 each carry N6-acetyllysine. The stretch at 427 to 446 is an intramembrane region; it reads AGLHVTEYEDNLKQSWVWKE. Ser550 carries the phosphoserine modification. [4Fe-4S] cluster-binding residues include Cys560, Cys585, Cys588, and Cys591. The 4Fe-4S ferredoxin-type domain maps to 576–605; sequence FRLQINAQNCVHCKTCDIKDPSQNINWVVP.

It belongs to the ETF-QO/FixC family. In terms of assembly, monomer. [4Fe-4S] cluster serves as cofactor. It depends on FAD as a cofactor.

The protein resides in the mitochondrion inner membrane. It carries out the reaction a ubiquinone + reduced [electron-transfer flavoprotein] = a ubiquinol + oxidized [electron-transfer flavoprotein] + H(+). Functionally, accepts electrons from ETF and reduces ubiquinone. This Rattus norvegicus (Rat) protein is Electron transfer flavoprotein-ubiquinone oxidoreductase, mitochondrial (Etfdh).